A 342-amino-acid polypeptide reads, in one-letter code: GTPase Obg (342 aa).

Residues 1 to 159 enclose the Obg domain; it reads MKFIDEAKIY…RWIRLELKLL (159 aa). Residues 160 to 332 enclose the OBG-type G domain; the sequence is ADVGIIGLPN…LLYKIGEALK (173 aa). Residues 166–173, 191–195, 214–217, 284–287, and 313–315 contribute to the GTP site; these read GLPNVGKS, FTTLT, DIPG, NKTD, and SAA. Mg(2+)-binding residues include S173 and T193.

This sequence belongs to the TRAFAC class OBG-HflX-like GTPase superfamily. OBG GTPase family. Monomer. The cofactor is Mg(2+).

It localises to the cytoplasm. An essential GTPase which binds GTP, GDP and possibly (p)ppGpp with moderate affinity, with high nucleotide exchange rates and a fairly low GTP hydrolysis rate. Plays a role in control of the cell cycle, stress response, ribosome biogenesis and in those bacteria that undergo differentiation, in morphogenesis control. This is GTPase Obg from Syntrophus aciditrophicus (strain SB).